A 181-amino-acid polypeptide reads, in one-letter code: Ferritin heavy chain (181 aa).

One can recognise a Ferritin-like diiron domain in the interval 10–159 (QNYHQDCEAA…DHVTNLRKMG (150 aa)). The Fe cation site is built by Glu-27, Glu-62, His-65, Glu-107, and Gln-141.

Belongs to the ferritin family. In terms of assembly, oligomer of 24 subunits. There are two types of subunits: L (light) chain and H (heavy) chain. The major chain can be light or heavy, depending on the species and tissue type. The functional molecule forms a roughly spherical shell with a diameter of 12 nm and contains a central cavity into which the insoluble mineral iron core is deposited. In terms of tissue distribution, expressed in erythroblasts (at protein level). Expressed in heart, liver, spleen, lung, kidney, large intestine, small intestine, muscle, glandular stomach, ovary and oviduct.

The protein localises to the cytoplasm. Its subcellular location is the lysosome. It is found in the cytoplasmic vesicle. The protein resides in the autophagosome. It carries out the reaction 4 Fe(2+) + O2 + 4 H(+) = 4 Fe(3+) + 2 H2O. In terms of biological role, stores iron in a soluble, non-toxic, readily available form. Important for iron homeostasis. Has ferroxidase activity. Iron is taken up in the ferrous form and deposited as ferric hydroxides after oxidation. Also plays a role in delivery of iron to cells. Mediates iron uptake in capsule cells of the developing kidney. Delivery to lysosomes is mediated by the cargo receptor NCOA4 for autophagic degradation and release of iron. Functionally, inhibits translation of various mRNA species in vitro. Associates with a 35S prosome-like particle that contains non-translated mRNAs in a complex with proteins. May be involved in pre-translational regulation of some mRNA. The sequence is that of Ferritin heavy chain from Anas platyrhynchos (Mallard).